We begin with the raw amino-acid sequence, 316 residues long: Thioredoxin reductase (316 aa).

36–43 contacts FAD; that stretch reads ERGIPGGQ. Residues cysteine 135 and cysteine 138 are joined by a disulfide bond. Residue 278-287 coordinates FAD; it reads DIREKSLRQI.

This sequence belongs to the class-II pyridine nucleotide-disulfide oxidoreductase family. In terms of assembly, homodimer. FAD serves as cofactor.

It is found in the cytoplasm. It catalyses the reaction [thioredoxin]-dithiol + NADP(+) = [thioredoxin]-disulfide + NADPH + H(+). The protein is Thioredoxin reductase (trxB) of Bacillus subtilis (strain 168).